Reading from the N-terminus, the 200-residue chain is MHTKGPTPQQHDGSALRIGIVHARWNETIIEPLLAGTKAKLLACGVKESNIVVQSVPGSWELPIAVQRLYSASQLQTPSSGPSLSAGDLLGSSTTDLTALPTTTASSTGPFDALIAIGVLIKGETMHFEYIADSVSHGLMRVQLDTGVPVIFGVLTVLTDDQAKARAGVIEGSHNHGEDWGLAAVEMGVRRRDWAAGKTE.

5-amino-6-(D-ribitylamino)uracil-binding positions include Trp-25, Ser-59–Glu-61, and Val-119–Ile-121. Position 124–125 (Glu-124–Thr-125) interacts with (2S)-2-hydroxy-3-oxobutyl phosphate. His-127 functions as the Proton donor in the catalytic mechanism. Phe-152 lines the 5-amino-6-(D-ribitylamino)uracil pocket. Arg-166 serves as a coordination point for (2S)-2-hydroxy-3-oxobutyl phosphate.

This sequence belongs to the DMRL synthase family. Homopentamer.

The enzyme catalyses (2S)-2-hydroxy-3-oxobutyl phosphate + 5-amino-6-(D-ribitylamino)uracil = 6,7-dimethyl-8-(1-D-ribityl)lumazine + phosphate + 2 H2O + H(+). It participates in cofactor biosynthesis; riboflavin biosynthesis; riboflavin from 2-hydroxy-3-oxobutyl phosphate and 5-amino-6-(D-ribitylamino)uracil: step 1/2. Functionally, catalyzes the formation of 6,7-dimethyl-8-ribityllumazine by condensation of 5-amino-6-(D-ribitylamino)uracil with 3,4-dihydroxy-2-butanone 4-phosphate. This is the penultimate step in the biosynthesis of riboflavin. The sequence is that of 6,7-dimethyl-8-ribityllumazine synthase from Pyricularia oryzae (strain 70-15 / ATCC MYA-4617 / FGSC 8958) (Rice blast fungus).